The following is a 293-amino-acid chain: Bifunctional protein FolD (293 aa).

Residues 162–164 and isoleucine 227 contribute to the NADP(+) site; that span reads GQS.

This sequence belongs to the tetrahydrofolate dehydrogenase/cyclohydrolase family. Homodimer.

The enzyme catalyses (6R)-5,10-methylene-5,6,7,8-tetrahydrofolate + NADP(+) = (6R)-5,10-methenyltetrahydrofolate + NADPH. It carries out the reaction (6R)-5,10-methenyltetrahydrofolate + H2O = (6R)-10-formyltetrahydrofolate + H(+). It participates in one-carbon metabolism; tetrahydrofolate interconversion. Its function is as follows. Catalyzes the oxidation of 5,10-methylenetetrahydrofolate to 5,10-methenyltetrahydrofolate and then the hydrolysis of 5,10-methenyltetrahydrofolate to 10-formyltetrahydrofolate. This chain is Bifunctional protein FolD, found in Metamycoplasma arthritidis (strain 158L3-1) (Mycoplasma arthritidis).